Here is a 455-residue protein sequence, read N- to C-terminus: Phosphoglucosamine mutase (455 aa).

The active-site Phosphoserine intermediate is serine 104. Residues serine 104, aspartate 253, aspartate 255, and aspartate 257 each coordinate Mg(2+). A Phosphoserine modification is found at serine 104.

This sequence belongs to the phosphohexose mutase family. The cofactor is Mg(2+). Activated by phosphorylation.

The catalysed reaction is alpha-D-glucosamine 1-phosphate = D-glucosamine 6-phosphate. Functionally, catalyzes the conversion of glucosamine-6-phosphate to glucosamine-1-phosphate. The polypeptide is Phosphoglucosamine mutase (Psychrobacter arcticus (strain DSM 17307 / VKM B-2377 / 273-4)).